The chain runs to 641 residues: Chaperone protein DnaK (641 aa).

Threonine 199 carries the phosphothreonine; by autocatalysis modification. The disordered stretch occupies residues 603–627 (YGQQQAEGGAQAAGAAGGSSKADDA). Low complexity predominate over residues 604–616 (GQQQAEGGAQAAG).

Belongs to the heat shock protein 70 family.

Its function is as follows. Acts as a chaperone. The chain is Chaperone protein DnaK from Azoarcus sp. (strain BH72).